We begin with the raw amino-acid sequence, 647 residues long: A-type voltage-gated potassium channel KCND1 (647 aa).

The Cytoplasmic portion of the chain corresponds to 1–183; it reads MAAGLATWLP…RAFENPHTST (183 aa). Residues 2-20 form an interaction with KCNIP1, KCNIP2, and other family members region; the sequence is AAGLATWLPFARAAAVGWL. The Zn(2+) site is built by histidine 104, cysteine 131, and cysteine 132. Residues 144 to 163 are disordered; it reads AERLAEDEEAEQAGDGPALP. Residues 184 to 205 traverse the membrane as a helical segment; sequence AALVFYYVTGFFIAVSVIANVV. The Extracellular portion of the chain corresponds to 206-230; sequence ETIPCRGSARRSSREQPCGERFPQA. A helical transmembrane segment spans residues 231-252; sequence FFCMDTACVLIFTGEYLLRLFA. The Cytoplasmic portion of the chain corresponds to 253-263; sequence APSRCRFLRSV. The helical transmembrane segment at 264 to 284 threads the bilayer; the sequence is MSLIDVVAILPYYIGLLVPKN. Residues 285–287 lie on the Extracellular side of the membrane; sequence DDV. Residues 288 to 308 form a helical; Voltage-sensor membrane-spanning segment; the sequence is SGAFVTLRVFRVFRIFKFSRH. Over 309–323 the chain is Cytoplasmic; that stretch reads SQGLRILGYTLKSCA. The segment at 310 to 323 is S4-S5 linker; that stretch reads QGLRILGYTLKSCA. A helical transmembrane segment spans residues 324–345; that stretch reads SELGFLLFSLTMAIIIFATVMF. Residues 346–359 are Extracellular-facing; the sequence is YAEKGTNKTNFTSI. 2 N-linked (GlcNAc...) asparagine glycosylation sites follow: asparagine 352 and asparagine 355. Residues 360 to 371 constitute an intramembrane region (helical); the sequence is PAAFWYTIVTMT. Residues 372–377 carry the Selectivity filter motif; that stretch reads TLGYGD. Residues 372-379 lie within the membrane without spanning it; it reads TLGYGDMV. The Extracellular segment spans residues 380 to 386; the sequence is PSTIAGK. A helical transmembrane segment spans residues 387–415; sequence IFGSICSLSGVLVIALPVPVIVSNFSRIY. Topologically, residues 416–647 are cytoplasmic; the sequence is HQNQRADKRR…FPETVKISSL (232 aa). Serine 458 carries the post-translational modification Phosphoserine. Positions 474–489 are required for dendritic targeting; it reads FEQQHHHLLHCLEKTT. A compositionally biased stretch (low complexity) spans 506–524; it reads VSPGGRTSRSTSVSSQPVG. Residues 506-531 form a disordered region; it reads VSPGGRTSRSTSVSSQPVGPGSLLSS. Serine 555 carries the post-translational modification Phosphoserine. Residues 601–634 form a disordered region; that stretch reads IPTPPANTPDESQPSSPGGGGRAGSTLRNSSLGT.

Belongs to the potassium channel family. D (Shal) (TC 1.A.1.2) subfamily. Kv4.1/KCND1 sub-subfamily. In terms of assembly, component of heteromultimeric potassium channels. Identified in potassium channel complexes containing KCND1, KCND2, KCND3, KCNIP1, KCNIP2, KCNIP3, KCNIP4, DPP6 and DPP10. Widely expressed. Highly expressed in brain, in particular in cerebellum and thalamus; detected at lower levels in the other parts of the brain.

Its subcellular location is the cell membrane. It carries out the reaction K(+)(in) = K(+)(out). Functionally, A-type voltage-gated potassium channel that mediates transmembrane potassium transport in excitable membranes in the brain. Mediates A-type current I(SA) in suprachiasmatic nucleus (SCN) neurons. Exhibits a low-threshold A-type current with a hyperpolarized steady-state inactivation midpoint and the recovery process was steeply voltage-dependent, with recovery being markedly faster at more negative potentials. May regulates repetitive firing rates in the suprachiasmatic nucleus (SCN) neurons and circadian rhythms in neuronal excitability and behavior. Contributes to the regulation of the circadian rhythm of action potential firing in suprachiasmatic nucleus neurons, which regulates the circadian rhythm of locomotor activity. The regulatory subunit KCNIP1 modulates the kinetics of channel inactivation, increases the current amplitudes and accelerates recovery from inactivation, shifts activation in a depolarizing direction. The regulatory subunit DPP10 decreases the voltage sensitivity of the inactivation channel gating. The protein is A-type voltage-gated potassium channel KCND1 of Homo sapiens (Human).